The following is a 303-amino-acid chain: Glutamyl-Q tRNA(Asp) synthetase (303 aa).

L-glutamate is bound by residues 9–13 (RFAPS) and Glu-45. The short motif at 12–22 (PSPSGSLHFGS) is the 'HIGH' region element. Positions 101, 103, 115, and 119 each coordinate Zn(2+). L-glutamate-binding residues include Tyr-172 and Arg-190. The short motif at 228–232 (KLSKQ) is the 'KMSKS' region element. Residue Lys-231 participates in ATP binding.

It belongs to the class-I aminoacyl-tRNA synthetase family. GluQ subfamily. The cofactor is Zn(2+).

Its function is as follows. Catalyzes the tRNA-independent activation of glutamate in presence of ATP and the subsequent transfer of glutamate onto a tRNA(Asp). Glutamate is transferred on the 2-amino-5-(4,5-dihydroxy-2-cyclopenten-1-yl) moiety of the queuosine in the wobble position of the QUC anticodon. The protein is Glutamyl-Q tRNA(Asp) synthetase of Serratia proteamaculans (strain 568).